The primary structure comprises 179 residues: Cell division protein ZapC (179 aa).

It belongs to the ZapC family. Interacts directly with FtsZ.

It is found in the cytoplasm. Its function is as follows. Contributes to the efficiency of the cell division process by stabilizing the polymeric form of the cell division protein FtsZ. Acts by promoting interactions between FtsZ protofilaments and suppressing the GTPase activity of FtsZ. This is Cell division protein ZapC from Photobacterium profundum (strain SS9).